Here is a 281-residue protein sequence, read N- to C-terminus: CCAAT/enhancer-binding protein epsilon (281 aa).

Residues 1–30 (MSHGTYYECEPRGGQQPLEFSGGRAGPGEL) are disordered. A Glycyl lysine isopeptide (Lys-Gly) (interchain with G-Cter in SUMO2) cross-link involves residue Lys-121. A Phosphoserine modification is found at Ser-181. Residues 204-267 (SLEYRLRRER…DTLRNLFRQI (64 aa)) form the bZIP domain. A basic motif region spans residues 208–228 (RLRRERNNIAVRKSRDKAKRR). A leucine-zipper region spans residues 230 to 237 (LETQQKVL).

Belongs to the bZIP family. C/EBP subfamily. As to quaternary structure, binds DNA as a homodimer and as a heterodimer. Can form stable heterodimers with CEBPA, CEBPB and CEBPD. Interacts with GATA1 and SPI1. Interacts with SMARCD2. Phosphorylated. In terms of tissue distribution, strongest expression occurs in promyelocyte and late-myeloblast-like cell lines.

The protein localises to the nucleus. Functionally, transcriptional activator. C/EBP are DNA-binding proteins that recognize two different motifs: the CCAAT homology common to many promoters and the enhanced core homology common to many enhancers. Required for the promyelocyte-myelocyte transition in myeloid differentiation. The chain is CCAAT/enhancer-binding protein epsilon (CEBPE) from Homo sapiens (Human).